The chain runs to 449 residues: Histone PARylation factor 1-like (449 aa).

The segment at 3 to 28 (KEDCKYWDKCYQQNPAHLSKYNHPKK) adopts a CCHC-type zinc-finger fold. Residues 18 to 93 (AHLSKYNHPK…AKGSYEAETE (76 aa)) form a disordered region. Basic and acidic residues-rich tracts occupy residues 28–41 (KQQEHEVDGAEGKK) and 54–69 (EQKKEEQTEPVNKDKS). A Phosphoserine modification is found at Ser-72. Glu-384 (proton donor) is an active-site residue.

It belongs to the HPF1 family.

It localises to the chromosome. It is found in the nucleus. Functionally, cofactor for serine ADP-ribosylation that confers serine specificity on Parp. Switches the amino acid specificity of Parp from aspartate or glutamate to serine residues. Acts by completing the active site of Parp: forms a composite active site composed of residues from HPF1/CG1218 and Parp. The sequence is that of Histone PARylation factor 1-like from Drosophila melanogaster (Fruit fly).